Here is a 761-residue protein sequence, read N- to C-terminus: MRASQVPNACSLLSLAMLFFPVTGTSKQNIPRLKLSYKDLLLSNSCIPFLGSTEGLDFRTLLLDEERGRLLVGAKDHIFLLNLVDLNKNVKKIYWPAAKEKMELCKLAGKDAHTDCANFIRVLQPYNRTHVYVCGTGAFHPLCGYIELGTHKEETIFRLDTQNLESGRLKCPFDPQQPFASVMADEYLYAGTASDFLGKDTALTRSLGPSHDHHYIRTDISEHYWLTGAKFIATFPIPDTYNPDDDKIYFFFREISQDSSTSDKTILSRVGRVCKNDMGGQRSLINKWTTFLKARLVCSIPGPEGADTHFDELQDIFLLSTRDERNPLVYGVFTTTSSVFKGSAVCVYSMADIRAVFNGPYAHKESADHRWVQYEGRIPYPRPGTCPSKTYDPLIKSTRDFPDEVISFIKRHPLMYKSVYPLTGGPVFTRINVDYRLTQIVVDHVMAEDGQYDVIFLGTDIGTVLKAVSITKEKWTKEEVVLEELQIFKHPSFISTMEISQKQQQLYIGSRDGLVQLSLHRCHTYGKACADCCLARDPYCAWDGNSCSRYAPTSKRRARRQDVKYGDPVAQCWDVEDSISHETADEKVIFGIEFNSTFLECIPKSQQASIRWYIQRSGEEHREELKADERIIKTEHGLLIRSLQRRDAGAYFCKAQEHTFIHTIVKLNLNVIENGQMESTQKTEDEEGRVRDLLTESRLRYKDYIQLVSSPSFSLDEYCEQMWHREKRRQRNKGGAKWKHVQEMKKKRNRRHHEPARPPST.

The first 24 residues, 1–24 (MRASQVPNACSLLSLAMLFFPVTG), serve as a signal peptide directing secretion. Residues 32 to 519 (RLKLSYKDLL…SRDGLVQLSL (488 aa)) form the Sema domain. A disulfide bridge connects residues cysteine 105 and cysteine 116. An N-linked (GlcNAc...) asparagine glycan is attached at asparagine 127. Disulfide bonds link cysteine 134–cysteine 143, cysteine 274–cysteine 386, cysteine 298–cysteine 346, and cysteine 522–cysteine 540. One can recognise an Ig-like C2-type domain in the interval 552 to 670 (PTSKRRARRQ…IHTIVKLNLN (119 aa)). Asparagine 595 carries an N-linked (GlcNAc...) asparagine glycan. The cysteines at positions 653 and 719 are disulfide-linked. Residues 728–754 (RRQRNKGGAKWKHVQEMKKKRNRRHHE) are compositionally biased toward basic residues. The segment at 728–761 (RRQRNKGGAKWKHVQEMKKKRNRRHHEPARPPST) is disordered.

This sequence belongs to the semaphorin family. As to expression, developing spinal cord and developing visual system. Collapsin-1, -2, -3, and -5 bind to overlapping but distinct axon tracts.

It is found in the secreted. Functionally, induces the collapse and paralysis of neuronal growth cones. Could potentially act as repulsive cues toward specific neuronal populations. Binds to neuropilin. This chain is Semaphorin-3D (SEMA3D), found in Gallus gallus (Chicken).